The sequence spans 153 residues: Probable Brix domain-containing ribosomal biogenesis protein (153 aa).

In terms of domain architecture, Brix spans 1–153 (MQVLTTSRKP…RILKISRSSR (153 aa)).

Functionally, probably involved in the biogenesis of the ribosome. The chain is Probable Brix domain-containing ribosomal biogenesis protein from Archaeoglobus fulgidus (strain ATCC 49558 / DSM 4304 / JCM 9628 / NBRC 100126 / VC-16).